The sequence spans 473 residues: Mitochondrial adenyl nucleotide antiporter SLC25A24-B (473 aa).

Residues 1–173 (MLEQVQKFLL…RYWKHSTVLD (173 aa)) are regulatory N-terminal domain. The Mitochondrial intermembrane segment spans residues 1–197 (MLEQVQKFLL…EKKTGQWWKQ (197 aa)). 4 EF-hand domains span residues 19 to 54 (DSQS…MGME), 55 to 88 (VGKG…EEHE), 86 to 121 (EHEK…LGIK), and 122 to 157 (ISLD…NPAD). Positions 32, 34, 36, 38, 43, 68, 70, 72, 74, 79, 99, 101, 103, 105, 110, 135, 137, 139, 141, and 146 each coordinate Ca(2+). Positions 159–168 (IQQIIRYWKH) are linker region. The interval 174 to 473 (IGDSLTIPDE…YEKMKVQLGI (300 aa)) is C-terminal transmembrane transporter domain. Solcar repeat units lie at residues 192–277 (GQWW…YKKL), 285–370 (LGTA…LKNY), and 382–470 (PGVL…MKVQ). The helical transmembrane segment at 198–215 (LMAGGMAGAVSRTGTAPL) threads the bilayer. Residues 216 to 251 (DRLKVMMQVHGSKGNSNIITGLKQMVKEGGIRSLWR) are Mitochondrial matrix-facing. The helical transmembrane segment at 252-271 (GNGVNVIKIAPETAMKFWAY) threads the bilayer. Residues 272–294 (EQYKKLFTSESGKLGTAERFVAG) lie on the Mitochondrial intermembrane side of the membrane. The helical transmembrane segment at 295–308 (SLAGATAQTSIYPM) threads the bilayer. At 309–344 (EVLKTRLAVGRTGQYSGMFDCAKKIMQKEGIRAFYK) the chain is on the mitochondrial matrix side. Residues 345 to 364 (GYIPNILGIIPYAGIDLAIY) traverse the membrane as a helical segment. Residues 365-387 (ETLKNYWLQNHAKDSANPGVLVL) lie on the Mitochondrial intermembrane side of the membrane. Residues 388–405 (LGCGTASSTCGQLASYPL) traverse the membrane as a helical segment. Over 406–444 (ALIRTRMQAQASIEGAPQLNMGGLFRKIVAKEGFLGLYR) the chain is Mitochondrial matrix. Residues 445-464 (GIGPNFLKVLPAVSISYVVY) form a helical membrane-spanning segment. The Mitochondrial intermembrane portion of the chain corresponds to 465–473 (EKMKVQLGI).

Belongs to the mitochondrial carrier (TC 2.A.29) family. Monomer.

The protein localises to the mitochondrion inner membrane. It carries out the reaction Mg(2+)(out) + phosphate(in) + ATP(out) = Mg(2+)(in) + phosphate(out) + ATP(in). The catalysed reaction is ADP(out) + phosphate(in) + H(+)(out) = ADP(in) + phosphate(out) + H(+)(in). The enzyme catalyses AMP(out) + phosphate(in) = AMP(in) + phosphate(out). It catalyses the reaction phosphate(in) + ATP(out) + 2 H(+)(out) = phosphate(out) + ATP(in) + 2 H(+)(in). It carries out the reaction dADP(in) + ADP(out) = dADP(out) + ADP(in). The catalysed reaction is Mg(2+)(in) + ADP(out) + ATP(in) + H(+)(out) = Mg(2+)(out) + ADP(in) + ATP(out) + H(+)(in). The enzyme catalyses ADP(out) + diphosphate(in) = ADP(in) + diphosphate(out). It catalyses the reaction dAMP(in) + ADP(out) + H(+)(out) = dAMP(out) + ADP(in) + H(+)(in). It carries out the reaction 3'-AMP(in) + ADP(out) + H(+)(out) = 3'-AMP(out) + ADP(in) + H(+)(in). The catalysed reaction is dAMP(out) + phosphate(in) = dAMP(in) + phosphate(out). The enzyme catalyses 3'-AMP(out) + phosphate(in) = 3'-AMP(in) + phosphate(out). It catalyses the reaction dADP(out) + phosphate(in) + H(+)(out) = dADP(in) + phosphate(out) + H(+)(in). Its activity is regulated as follows. Activated by an increase in cytosolic calcium levels that induce a conformational change of the N-terminal regulatory domain, uncapping the channel and allowing transport. Inhibited by bathophenanthroline, mersalyl, p-hydroxymercuribenzoate, bromcresol purple and tannic acid. In terms of biological role, electroneutral antiporter that mediates the transport of adenyl nucleotides through the inner mitochondrial membrane. Originally identified as an ATP-magnesium/inorganic phosphate antiporter, it also acts as a broad specificity adenyl nucleotide antiporter. By regulating the mitochondrial matrix adenyl nucleotide pool could adapt to changing cellular energetic demands and indirectly regulate adenyl nucleotide-dependent metabolic pathways. In Xenopus laevis (African clawed frog), this protein is Mitochondrial adenyl nucleotide antiporter SLC25A24-B (slc25a24-b).